A 438-amino-acid chain; its full sequence is Cysteine--tRNA ligase (438 aa).

C28 serves as a coordination point for Zn(2+). The short motif at 30 to 40 (PTVYNHLHLGN) is the 'HIGH' region element. Residues C207, H232, and E236 each contribute to the Zn(2+) site. Positions 264–268 (KMSKS) match the 'KMSKS' region motif. K267 contacts ATP.

It belongs to the class-I aminoacyl-tRNA synthetase family. Monomer. It depends on Zn(2+) as a cofactor.

The protein localises to the cytoplasm. It catalyses the reaction tRNA(Cys) + L-cysteine + ATP = L-cysteinyl-tRNA(Cys) + AMP + diphosphate. This is Cysteine--tRNA ligase from Onion yellows phytoplasma (strain OY-M).